We begin with the raw amino-acid sequence, 367 residues long: Queuine tRNA-ribosyltransferase (367 aa).

Catalysis depends on Asp-89, which acts as the Proton acceptor. Residues Asp-89–Phe-93, Asp-143, Gln-185, and Gly-212 each bind substrate. Residues Gly-243 to Asp-249 are RNA binding. Asp-262 functions as the Nucleophile in the catalytic mechanism. Residues Thr-267–Arg-271 form an RNA binding; important for wobble base 34 recognition region. Zn(2+)-binding residues include Cys-300, Cys-302, Cys-305, and His-331.

It belongs to the queuine tRNA-ribosyltransferase family. As to quaternary structure, homodimer. Within each dimer, one monomer is responsible for RNA recognition and catalysis, while the other monomer binds to the replacement base PreQ1. Requires Zn(2+) as cofactor.

The catalysed reaction is 7-aminomethyl-7-carbaguanine + guanosine(34) in tRNA = 7-aminomethyl-7-carbaguanosine(34) in tRNA + guanine. Its pathway is tRNA modification; tRNA-queuosine biosynthesis. Catalyzes the base-exchange of a guanine (G) residue with the queuine precursor 7-aminomethyl-7-deazaguanine (PreQ1) at position 34 (anticodon wobble position) in tRNAs with GU(N) anticodons (tRNA-Asp, -Asn, -His and -Tyr). Catalysis occurs through a double-displacement mechanism. The nucleophile active site attacks the C1' of nucleotide 34 to detach the guanine base from the RNA, forming a covalent enzyme-RNA intermediate. The proton acceptor active site deprotonates the incoming PreQ1, allowing a nucleophilic attack on the C1' of the ribose to form the product. After dissociation, two additional enzymatic reactions on the tRNA convert PreQ1 to queuine (Q), resulting in the hypermodified nucleoside queuosine (7-(((4,5-cis-dihydroxy-2-cyclopenten-1-yl)amino)methyl)-7-deazaguanosine). The protein is Queuine tRNA-ribosyltransferase of Thiobacillus denitrificans (strain ATCC 25259 / T1).